Reading from the N-terminus, the 359-residue chain is 3-dehydroquinate synthase (359 aa).

NAD(+) is bound by residues 71-76 (DGEQFK), 105-109 (GVIGD), 129-130 (TT), K142, K151, and 169-172 (CLHT). 3 residues coordinate Zn(2+): E184, H247, and H264.

Belongs to the sugar phosphate cyclases superfamily. Dehydroquinate synthase family. Co(2+) serves as cofactor. Requires Zn(2+) as cofactor. The cofactor is NAD(+).

It is found in the cytoplasm. The catalysed reaction is 7-phospho-2-dehydro-3-deoxy-D-arabino-heptonate = 3-dehydroquinate + phosphate. It functions in the pathway metabolic intermediate biosynthesis; chorismate biosynthesis; chorismate from D-erythrose 4-phosphate and phosphoenolpyruvate: step 2/7. In terms of biological role, catalyzes the conversion of 3-deoxy-D-arabino-heptulosonate 7-phosphate (DAHP) to dehydroquinate (DHQ). This chain is 3-dehydroquinate synthase, found in Shewanella putrefaciens (strain CN-32 / ATCC BAA-453).